The chain runs to 221 residues: Kynurenine formamidase (221 aa).

F30 is a substrate binding site. Residues H60, H64, and D66 each coordinate Zn(2+). Residue H70 is the Proton donor/acceptor of the active site. Zn(2+) is bound by residues H172 and E184.

It belongs to the Cyclase 1 superfamily. KynB family. Homodimer. Zn(2+) serves as cofactor.

It catalyses the reaction N-formyl-L-kynurenine + H2O = L-kynurenine + formate + H(+). Its pathway is amino-acid degradation; L-tryptophan degradation via kynurenine pathway; L-kynurenine from L-tryptophan: step 2/2. In terms of biological role, catalyzes the hydrolysis of N-formyl-L-kynurenine to L-kynurenine, the second step in the kynurenine pathway of tryptophan degradation. The sequence is that of Kynurenine formamidase from Polaromonas sp. (strain JS666 / ATCC BAA-500).